A 205-amino-acid chain; its full sequence is Guanylate kinase (205 aa).

The Guanylate kinase-like domain occupies 7–185 (GNIFIISAAS…AEGDLLHIVN (179 aa)). 14 to 21 (AASGTGKT) is a binding site for ATP.

The protein belongs to the guanylate kinase family.

It is found in the cytoplasm. It catalyses the reaction GMP + ATP = GDP + ADP. In terms of biological role, essential for recycling GMP and indirectly, cGMP. In Neisseria gonorrhoeae (strain ATCC 700825 / FA 1090), this protein is Guanylate kinase.